The primary structure comprises 284 residues: Diaminopimelate epimerase (284 aa).

Asn21, Gln54, and Asn74 together coordinate substrate. The Proton donor role is filled by Cys83. Residues 84-85 (GN), Asn167, Asn200, and 218-219 (ER) contribute to the substrate site. The active-site Proton acceptor is the Cys227. 228-229 (GS) provides a ligand contact to substrate.

It belongs to the diaminopimelate epimerase family. As to quaternary structure, homodimer.

It is found in the cytoplasm. It carries out the reaction (2S,6S)-2,6-diaminopimelate = meso-2,6-diaminopimelate. It participates in amino-acid biosynthesis; L-lysine biosynthesis via DAP pathway; DL-2,6-diaminopimelate from LL-2,6-diaminopimelate: step 1/1. Its function is as follows. Catalyzes the stereoinversion of LL-2,6-diaminopimelate (L,L-DAP) to meso-diaminopimelate (meso-DAP), a precursor of L-lysine and an essential component of the bacterial peptidoglycan. The sequence is that of Diaminopimelate epimerase from Buchnera aphidicola subsp. Acyrthosiphon pisum (strain APS) (Acyrthosiphon pisum symbiotic bacterium).